The chain runs to 108 residues: Thioredoxin (108 aa).

Residues 2-108 (GKYFEATDKN…IAKKIDEHIG (107 aa)) enclose the Thioredoxin domain. Residues cysteine 32 and cysteine 35 are joined by a disulfide bond.

The protein belongs to the thioredoxin family.

Its function is as follows. Participates in various redox reactions through the reversible oxidation of its active center dithiol to a disulfide and catalyzes dithiol-disulfide exchange reactions. In Chlorobaculum thiosulfatiphilum (Chlorobium limicola f.sp. thiosulfatophilum), this protein is Thioredoxin (trxA).